The sequence spans 248 residues: Tetraspanin-17 (248 aa).

Residues 1–7 (MSEVRTG) lie on the Cytoplasmic side of the membrane. The helical transmembrane segment at 8–28 (FLTMTTIILISIGLTMMGTGL) threads the bilayer. Topologically, residues 29-44 (YQKTTMSSCIRETSSQ) are extracellular. The chain crosses the membrane as a helical span at residues 45 to 65 (FTLLGLLLLLIPQIGLYGICC). Topologically, residues 66–69 (RSKR) are cytoplasmic. The helical transmembrane segment at 70 to 90 (LFNFFFYGMVVLIIIVSYYSI) threads the bilayer. At 91–210 (KCSIYNTTFG…ILKAIVHQWK (120 aa)) the chain is on the extracellular side. N96, N109, and N141 each carry an N-linked (GlcNAc...) asparagine glycan. A helical membrane pass occupies residues 211–231 (YLSMFAYPALVLSCISLAIAW). Residues 232–248 (SLKETIHENEDYRGSYS) lie on the Cytoplasmic side of the membrane.

This sequence belongs to the tetraspanin (TM4SF) family.

It localises to the membrane. In terms of biological role, may be involved in the regulation of cell differentiation. This Arabidopsis thaliana (Mouse-ear cress) protein is Tetraspanin-17 (TET17).